The sequence spans 310 residues: MEKEILLLLLVIMFLTVADVDAVRVPFCATKSAKDSIFGLRDQTCSVSGVESDERPRFVAVTEGDERWLQIALDMIHKNKCDYVALLFYASWCPFSRSFRPSFDVISSLYSSIPHFAIKESSIKPSTLSKYGVHGFPTLLLLNSTMRARYRGTRMLDSLVAFYSDVTGIETLDKTSLERSVSVPHLGNENNTEPENCPFTWARSPENMLRQETYLALAIVFVLLRLLHLIYPTLVVFMKFTWRRIAQNMRLESLLEHTVGFLSRAVQLCMHRRSNLQGGAMNARAWASKSLATVSIGDSSSSNRRSSSSQ.

An N-terminal signal peptide occupies residues 1–22 (MEKEILLLLLVIMFLTVADVDA). A Thioredoxin domain is found at 49 to 168 (GVESDERPRF…LVAFYSDVTG (120 aa)). N-linked (GlcNAc...) asparagine glycosylation is found at N143 and N190. The helical transmembrane segment at 217–237 (LAIVFVLLRLLHLIYPTLVVF) threads the bilayer.

It localises to the membrane. The protein is 5'-adenylylsulfate reductase-like 4 (APRL4) of Arabidopsis thaliana (Mouse-ear cress).